Here is a 273-residue protein sequence, read N- to C-terminus: 3-methyl-2-oxobutanoate hydroxymethyltransferase (273 aa).

Mg(2+) is bound by residues Asp-41 and Asp-80. 3-methyl-2-oxobutanoate contacts are provided by residues 41–42 (DS), Asp-80, and Lys-110. Glu-112 lines the Mg(2+) pocket. Glu-180 functions as the Proton acceptor in the catalytic mechanism.

Belongs to the PanB family. Homodecamer; pentamer of dimers. Mg(2+) is required as a cofactor.

Its subcellular location is the cytoplasm. The enzyme catalyses 3-methyl-2-oxobutanoate + (6R)-5,10-methylene-5,6,7,8-tetrahydrofolate + H2O = 2-dehydropantoate + (6S)-5,6,7,8-tetrahydrofolate. It participates in cofactor biosynthesis; (R)-pantothenate biosynthesis; (R)-pantoate from 3-methyl-2-oxobutanoate: step 1/2. In terms of biological role, catalyzes the reversible reaction in which hydroxymethyl group from 5,10-methylenetetrahydrofolate is transferred onto alpha-ketoisovalerate to form ketopantoate. The protein is 3-methyl-2-oxobutanoate hydroxymethyltransferase of Deinococcus geothermalis (strain DSM 11300 / CIP 105573 / AG-3a).